The chain runs to 131 residues: MAKEYSRTQRIGDQMQRELAQLIRREVKDPRVGLVTITAVEVSRDVGHAKIFITVMGQDSAEEIAQSIKVLNAAAGFLRMQLAREMKLRSVPQLHFHYDESVVRGAHLSALIERAVAEDSQHPSTPEDAKE.

Belongs to the RbfA family. As to quaternary structure, monomer. Binds 30S ribosomal subunits, but not 50S ribosomal subunits or 70S ribosomes.

The protein localises to the cytoplasm. In terms of biological role, one of several proteins that assist in the late maturation steps of the functional core of the 30S ribosomal subunit. Associates with free 30S ribosomal subunits (but not with 30S subunits that are part of 70S ribosomes or polysomes). Required for efficient processing of 16S rRNA. May interact with the 5'-terminal helix region of 16S rRNA. In Pseudomonas fluorescens (strain SBW25), this protein is Ribosome-binding factor A.